Reading from the N-terminus, the 711-residue chain is Catalase HPII (711 aa).

The span at 1–10 shows a compositional bias: basic and acidic residues; sequence MPSKKTDAPK. The interval 1-27 is disordered; sequence MPSKKTDAPKQSEAAGTQTPDRANTNA. Residues 14-27 show a composition bias toward polar residues; sequence AAGTQTPDRANTNA. Residues H92 and N165 contribute to the active site. Residue Y379 participates in heme binding.

This sequence belongs to the catalase family. HPII subfamily. The cofactor is heme.

It localises to the cytoplasm. It catalyses the reaction 2 H2O2 = O2 + 2 H2O. In terms of biological role, decomposes hydrogen peroxide into water and oxygen; serves to protect cells from the toxic effects of hydrogen peroxide. This chain is Catalase HPII (katE), found in Pseudomonas putida (Arthrobacter siderocapsulatus).